Reading from the N-terminus, the 152-residue chain is Large ribosomal subunit protein bL9 (152 aa).

Belongs to the bacterial ribosomal protein bL9 family.

Binds to the 23S rRNA. The protein is Large ribosomal subunit protein bL9 of Microcystis aeruginosa (strain NIES-843 / IAM M-2473).